Here is a 146-residue protein sequence, read N- to C-terminus: Large ribosomal subunit protein uL15 (146 aa).

Residues 1–13 show a composition bias toward basic and acidic residues; sequence MKLHELKAAEGSR. The interval 1–61 is disordered; the sequence is MKLHELKAAE…GGQTPLFRRM (61 aa). Gly residues-rich tracts occupy residues 23-35 and 42-52; these read TSSGNGKTSGRGQ and SGGGVRLGFEG.

The protein belongs to the universal ribosomal protein uL15 family. In terms of assembly, part of the 50S ribosomal subunit.

Functionally, binds to the 23S rRNA. The polypeptide is Large ribosomal subunit protein uL15 (Streptococcus uberis (strain ATCC BAA-854 / 0140J)).